The primary structure comprises 248 residues: DNA/RNA-binding protein ALBA1 (248 aa).

Residues 217-248 are disordered; it reads GRDGGYRGGNRGGSRSGFRGGRGGFRGGRALS. A compositionally biased stretch (gly residues) spans 222–248; sequence YRGGNRGGSRSGFRGGRGGFRGGRALS.

This sequence belongs to the histone-like Alba family. In terms of assembly, may form homodimers. Identified in a TARE6-associated complex consisting of over 30 proteins and including ALBA1, ALBA2 and ALBA4; the complex binds to the non-coding subtelomeric repeat region TARE6.

The protein resides in the nucleus. It localises to the chromosome. Its subcellular location is the telomere. It is found in the cytoplasm. Functionally, possesses DNA- and RNA-binding activities. During the asexual blood stages binds to a sub-population of mature mRNAs and regulates the timing of their translation. Binds to DNA with relaxed sequence specificity. Associates with the subtelomeric TARE6 repeats. This is DNA/RNA-binding protein ALBA1 from Plasmodium falciparum (isolate 3D7).